Here is a 527-residue protein sequence, read N- to C-terminus: Flagellar radial spoke protein 5 (527 aa).

The segment at Met1–Asn22 is disordered. Residues Arg101–Phe153 adopt a coiled-coil conformation. Asymmetric dimethylarginine is present on residues Arg191 and Arg366.

This sequence belongs to the aldo/keto reductase family. In terms of processing, asymmetrically dimethylated at Arg-191 and Arg-366 during flagellum resorption. Probably methylated by PRMT1.

The protein localises to the cytoplasm. It localises to the cytoskeleton. Its subcellular location is the flagellum axoneme. Functionally, flagellar radial spokes contribute to the regulation of dynein arm activity and thus the pattern of flagellar bending. They consist of a thin stalk, which is attached to the a subfiber of the outer doublet microtubule, and a bulbous head, which is attached to the stalk and appears to interact with the projections from the central pair of microtubules. The chain is Flagellar radial spoke protein 5 from Chlamydomonas reinhardtii (Chlamydomonas smithii).